The following is a 331-amino-acid chain: Ketol-acid reductoisomerase (NADP(+)) (331 aa).

Residues 1–182 (MATLYYDTDA…GGTRAGILET (182 aa)) form the KARI N-terminal Rossmann domain. Residues 25–28 (YGSQ), serine 51, serine 53, and 83–86 (DEFQ) contribute to the NADP(+) site. The active site involves histidine 108. Glycine 134 lines the NADP(+) pocket. Residues 183–328 (NFKEETETDL…KGLRAMFSWL (146 aa)) enclose the KARI C-terminal knotted domain. Aspartate 191, glutamate 195, glutamate 227, and glutamate 231 together coordinate Mg(2+). Serine 252 contributes to the substrate binding site.

Belongs to the ketol-acid reductoisomerase family. It depends on Mg(2+) as a cofactor.

The catalysed reaction is (2R)-2,3-dihydroxy-3-methylbutanoate + NADP(+) = (2S)-2-acetolactate + NADPH + H(+). It carries out the reaction (2R,3R)-2,3-dihydroxy-3-methylpentanoate + NADP(+) = (S)-2-ethyl-2-hydroxy-3-oxobutanoate + NADPH + H(+). The protein operates within amino-acid biosynthesis; L-isoleucine biosynthesis; L-isoleucine from 2-oxobutanoate: step 2/4. Its pathway is amino-acid biosynthesis; L-valine biosynthesis; L-valine from pyruvate: step 2/4. Its function is as follows. Involved in the biosynthesis of branched-chain amino acids (BCAA). Catalyzes an alkyl-migration followed by a ketol-acid reduction of (S)-2-acetolactate (S2AL) to yield (R)-2,3-dihydroxy-isovalerate. In the isomerase reaction, S2AL is rearranged via a Mg-dependent methyl migration to produce 3-hydroxy-3-methyl-2-ketobutyrate (HMKB). In the reductase reaction, this 2-ketoacid undergoes a metal-dependent reduction by NADPH to yield (R)-2,3-dihydroxy-isovalerate. The sequence is that of Ketol-acid reductoisomerase (NADP(+)) from Synechococcus sp. (strain RCC307).